Reading from the N-terminus, the 1413-residue chain is Zinc finger protein 609 (1413 aa).

Disordered regions lie at residues 1–26 (MSLS…SGDE), 47–196 (QKLE…GRGS), 354–484 (RFCD…EPTL), 517–659 (AHAH…RPIA), and 695–765 (PNSP…AAGD). Serine 358, serine 361, and serine 379 each carry phosphoserine. Position 381 is a phosphothreonine (threonine 381). Low complexity predominate over residues 386 to 405 (AAAASDSKGTSSSSKTRAGA). 6 positions are modified to phosphoserine: serine 413, serine 433, serine 446, serine 452, serine 467, and serine 470. Residues 423-437 (ASSTSEDVKASPSSA) are compositionally biased toward polar residues. A Glycyl lysine isopeptide (Lys-Gly) (interchain with G-Cter in SUMO2) cross-link involves residue lysine 479. Residues 495-520 (IDCPHPNCNKKYKHINGLKYHQAHAH) form a C2H2-type zinc finger. A compositionally biased stretch (basic and acidic residues) spans 519–529 (AHTDDDSKPEA). Phosphoserine is present on residues serine 533, serine 575, and serine 577. Residues 625 to 648 (SLERKCMEKEKCKKPSSLKSEKIP) show a composition bias toward basic and acidic residues. Basic residues predominate over residues 725–735 (DKKKKDKKKKD). The residue at position 742 (serine 742) is a Phosphoserine. Position 745 is a phosphothreonine (threonine 745). Over residues 750–763 (CRAEEGKSPFRDAA) the composition is skewed to basic and acidic residues. Serine 757 carries the post-translational modification Phosphoserine. Residue lysine 788 forms a Glycyl lysine isopeptide (Lys-Gly) (interchain with G-Cter in SUMO2) linkage. Residues 797 to 843 (FTDNAPSPSIGGSSRLDSTTPTQPLTPLHVVTQNGAEASSVKTNSPA) show a composition bias toward polar residues. Disordered stretches follow at residues 797–962 (FTDN…VIQQ), 1004–1127 (YEEQ…RQAE), 1154–1221 (IKSE…SPLT), and 1273–1369 (SKVS…STHH). Serine 803 carries the phosphoserine modification. Position 822 is a phosphothreonine (threonine 822). Phosphoserine is present on residues serine 841, serine 845, and serine 848. Positions 854 to 875 (GEGKVDSAKSKDPEQLVKEGAK) are enriched in basic and acidic residues. A compositionally biased stretch (polar residues) spans 902-916 (YAQSSPGTLTSSSQA). A compositionally biased stretch (basic and acidic residues) spans 925–949 (TKKDEEPESVEGKVKNDVCEEKKPE). Positions 950–962 (LSNSSQQPSVIQQ) are enriched in polar residues. Basic and acidic residues predominate over residues 1022-1044 (GLDKKTEMGLKEREASLKEEWKQ). At serine 1057 the chain carries Phosphoserine. Lysine 1063 participates in a covalent cross-link: Glycyl lysine isopeptide (Lys-Gly) (interchain with G-Cter in SUMO2). 3 stretches are compositionally biased toward basic and acidic residues: residues 1099–1115 (LKGK…EASE), 1154–1189 (IKSE…KEST), and 1197–1210 (PSEE…EPRP). A Glycyl lysine isopeptide (Lys-Gly) (interchain with G-Cter in SUMO2) cross-link involves residue lysine 1155. Polar residues predominate over residues 1288 to 1298 (PSVSCKASSES). Residue lysine 1299 forms a Glycyl lysine isopeptide (Lys-Gly) (interchain with G-Cter in SUMO2) linkage. Positions 1330-1348 (GCGVVGGGGSCGSVAGAGG) are enriched in gly residues.

As to quaternary structure, interacts (via N-terminus) with NIPBL. Interacts with the multiprotein complex Integrator. Expressed in myoblasts. Expressed in neurons in various brain regions, including striatum, prefrontal cortex, olfactory bulb, midbrain, cerebellum and hippocampus. Expressed in neural stem cells (at protein level). Expressed in thymocytes.

It localises to the nucleus. In terms of biological role, transcription factor, which activates RAG1, and possibly RAG2, transcription. Through the regulation of RAG1/2 expression, may regulate thymocyte maturation. Along with NIPBL and the multiprotein complex Integrator, promotes cortical neuron migration during brain development by regulating the transcription of crucial genes in this process. Preferentially binds promoters containing paused RNA polymerase II. Up-regulates the expression of SEMA3A, NRP1, PLXND1 and GABBR2 genes, among others. Functionally, involved in regulation of myoblast proliferation during myogenesis. This chain is Zinc finger protein 609 (Znf609), found in Mus musculus (Mouse).